The following is a 377-amino-acid chain: Guanine nucleotide-binding protein subunit alpha-13 (377 aa).

2 S-palmitoyl cysteine lipidation sites follow: Cys14 and Cys18. The G-alpha domain maps to 47-377 (RLVKILLLGA…HDNLKQLMLQ (331 aa)). The tract at residues 50 to 63 (KILLLGAGESGKST) is G1 motif. GTP is bound by residues 58 to 63 (ESGKST), Ser173, and 197 to 200 (LLAR). Ser62 is a binding site for Mg(2+). Residues 195–203 (DILLARRPT) form a G2 motif region. Thr203 serves as a coordination point for Mg(2+). The residue at position 203 (Thr203) is a Phosphothreonine. A G3 motif region spans residues 218–227 (FKMVDVGGQR). A G4 motif region spans residues 287 to 294 (ILFLNKTD). GTP contacts are provided by residues 291-294 (NKTD) and Ala349. A G5 motif region spans residues 347–352 (TTAINT).

Belongs to the G-alpha family. G(12) subfamily. G proteins are composed of 3 units; alpha, beta and gamma. The alpha chain contains the guanine nucleotide binding site. Interacts with UBXD5. Interacts with HAX1. Interacts (in GTP-bound form) with PPP5C (via TPR repeats); activates PPP5C phosphatase activity and translocates PPP5C to the cell membrane. Interacts with RGS22. Interacts (in GTP-bound form) with ARHGEF1. Interacts (in GTP-bound form) with ARHGEF11 (via RGS domain). Interacts (in GTP-bound form) with ARHGEF12 (via RGS domain). Interacts with CTNND1. Interacts with GAS2L2. Interacts with GPR35. Interacts with GPR174. Phosphorylation on Thr-203 destabilizes the heterotrimer of alpha, beta and gamma, and inhibits Rho activation. In terms of tissue distribution, expressed in brain and testis, as well as in kidney and sperm (at protein level).

It is found in the membrane. Its subcellular location is the melanosome. The protein localises to the cytoplasm. The protein resides in the nucleus. Functionally, guanine nucleotide-binding proteins (G proteins) are involved as modulators or transducers in various transmembrane signaling systems. Activates effector molecule RhoA by binding and activating RhoGEFs (ARHGEF1/p115RhoGEF, ARHGEF11/PDZ-RhoGEF and ARHGEF12/LARG). GNA13-dependent Rho signaling subsequently regulates transcription factor AP-1 (activating protein-1). Promotes tumor cell invasion and metastasis by activating Rho/ROCK signaling pathway. Inhibits CDH1-mediated cell adhesion in a process independent from Rho activation. In lymphoid follicles, transmits P2RY8- and S1PR2-dependent signals that lead to inhibition of germinal center (GC) B cell growth and migration outside the GC niche. The protein is Guanine nucleotide-binding protein subunit alpha-13 (Gna13) of Mus musculus (Mouse).